The chain runs to 533 residues: Nuclear receptor corepressor 1 (533 aa).

The segment covering 1–17 (KDKGPPPKSRYEEELRT) has biased composition (basic and acidic residues). The interval 1-21 (KDKGPPPKSRYEEELRTRGKT) is disordered. The CORNR box 1 motif lies at 29-33 (IDVII). The tract at residues 37 to 144 (IASDKDARER…EGMGQVPRTH (108 aa)) is disordered. Residues 38-47 (ASDKDARERG) are compositionally biased toward basic and acidic residues. Low complexity predominate over residues 48 to 59 (SQSSDSSSSLSS). A phosphoserine mark is found at Ser73 and Ser77. The ID1 stretch occupies residues 130 to 209 (PSSQAEGMGQ…QSQTVLHPRP (80 aa)). The segment at 145-148 (RLIT) is required for interaction with RARA in the absence of its ligand. Residues 153–157 (ICQII) carry the CORNR box 2 motif. Residues 165–180 (QVPSQPSTSTFQTSPS) show a composition bias toward low complexity. Residues 165 to 254 (QVPSQPSTST…SPPQGPAVHE (90 aa)) form a disordered region. The span at 181–204 (ALSSTPVRTKPSSRYSPESQSQTV) shows a compositional bias: polar residues. Phosphoserine occurs at positions 196, 214, 230, 245, and 278. Basic and acidic residues predominate over residues 218–236 (LVDKSRGSRPGKSPERSHI). The segment at 306–367 (IFRKLNSSGG…EDIIRKALMG (62 aa)) is ID2. The CORNR box 3 signature appears at 357–361 (LEDII). The span at 382-399 (HPVGVVPGSASTSVVTSS) shows a compositional bias: low complexity. Residues 382–476 (HPVGVVPGSA…RPSSTGSTQF (95 aa)) are disordered. Position 492 is a phosphothreonine (Thr492). Phosphoserine occurs at positions 529 and 531.

The protein belongs to the N-CoR nuclear receptor corepressors family. Forms a large corepressor complex that contains SIN3A/B and histone deacetylases HDAC1 and HDAC2. This complex associates with the thyroid receptor (TR) and the retinoid acid receptor (RAR) in the absence of ligand. Interacts directly with RARA; the interaction is facilitated with RARA trimethylation. Component of the N-Cor repressor complex, at least composed of CBFA2T3, HEXIM1, NCOR1, NCOR2, HDAC3, TBL1X, TBL1XR1, CORO2A and GPS2. Interacts with ZBTB33; the interaction serves to recruit the N-CoR complex to promoter regions containing methylated CpG dinucleotides. Interacts with TRIM28 and KDM3A. Interacts (via the RD1 domain) with BAZ1A (via its N-terminal); the interaction corepresses a number of NCOR1-regulated genes. Interacts with BCL6, C1D, DACH1, HEXIM1, HDAC7, RORA, RORC, SAP30, SIAH2, SIN3A and SIN3B. May interact with DEAF1. Interacts with RXRA. Interacts with SETD5. Interacts with VDR. Interacts with ZBTB7A. Interacts with AR. Interacts with HDAC3. Ubiquitinated; mediated by SIAH2 and leading to its subsequent proteasomal degradation.

The protein resides in the nucleus. In terms of biological role, mediates transcriptional repression by certain nuclear receptors. Part of a complex which promotes histone deacetylation and the formation of repressive chromatin structures which may impede the access of basal transcription factors. Participates in the transcriptional repressor activity produced by BCL6. Recruited by ZBTB7A to the androgen response elements/ARE on target genes, negatively regulates androgen receptor signaling and androgen-induced cell proliferation. Mediates the NR1D1-dependent repression and circadian regulation of TSHB expression. The NCOR1-HDAC3 complex regulates the circadian expression of the core clock gene ARTNL/BMAL1 and the genes involved in lipid metabolism in the liver. The polypeptide is Nuclear receptor corepressor 1 (Ncor1) (Rattus norvegicus (Rat)).